The chain runs to 682 residues: ATP-dependent DNA helicase RecG (682 aa).

The interval 46 to 139 is wedge domain; it reads ELRDLEEVKH…LKNGPHQEDK (94 aa). Residues 271 to 432 form the Helicase ATP-binding domain; sequence DMSSPYRMNR…VFGEMDVSVI (162 aa). Position 284 to 291 (284 to 291) interacts with ATP; that stretch reads GDVGSGKT. The short motif at 385–388 is the DEAH box element; it reads DEQH. The 161-residue stretch at 451–611 folds into the Helicase C-terminal domain; that stretch reads MLDRILAFVE…GFELSEKDLE (161 aa).

Belongs to the helicase family. RecG subfamily. As to quaternary structure, monomer. Interacts with SSB (sbbA), via the latter's 6 C-terminal residues. Colocalizes with DNA pol III subunit gamma/tau (dnaX).

It localises to the cytoplasm. Its subcellular location is the nucleoid. It catalyses the reaction Couples ATP hydrolysis with the unwinding of duplex DNA by translocating in the 3'-5' direction.. The catalysed reaction is ATP + H2O = ADP + phosphate + H(+). Replication fork regression on Holliday junctions (HJ) is inhibited by DisA; DisA inhibits the ATPase activity of RecG. Its function is as follows. Critical role in recombination and DNA repair. Helps process Holliday junction intermediates to mature products by catalyzing branch migration. Has a DNA unwinding activity characteristic of a DNA helicase with 3'-5' polarity. Unwinds branched duplex DNA (Y-DNA), Holliday junction (HJ) DNA and partially replicated forks as well as catalyzing fork reversal/regression. Does not seem to unwind R-loops. Inhibits the diadenylate cyclase (DAC) activity of DisA in the presence but not absence of HJ DNA, possibly by relocating DisA from the junction. The protein is ATP-dependent DNA helicase RecG of Bacillus subtilis (strain 168).